Reading from the N-terminus, the 510-residue chain is Maturase K (510 aa).

It belongs to the intron maturase 2 family. MatK subfamily.

The protein localises to the plastid. It localises to the chloroplast. Its function is as follows. Usually encoded in the trnK tRNA gene intron. Probably assists in splicing its own and other chloroplast group II introns. This Mammillaria haageana (Cactus) protein is Maturase K.